We begin with the raw amino-acid sequence, 143 residues long: MSTKKVYSFLSQAFIFSAIMLISNIIATHLPIPMPSSVIGLVILFSLLCLKVIKLEQVESLGTALTGIIGFLFVPSGISVINSLGVMGQYFVQILTVIVVATVILLAVTGLFAQFILGKDKKETEDTKELKVVNKGRKHGKVA.

The next 4 helical transmembrane spans lie at 6–26 (VYSFLSQAFIFSAIMLISNII), 30–50 (LPIPMPSSVIGLVILFSLLCL), 61–81 (LGTALTGIIGFLFVPSGISVI), and 97–117 (VIVVATVILLAVTGLFAQFIL).

The protein belongs to the CidA/LrgA family. LrgA subfamily.

The protein resides in the cell membrane. Its function is as follows. Inhibits the expression or activity of extracellular murein hydrolases by interacting, possibly with LrgB, with the holin-like protein CidA. The LrgAB and CidA proteins may affect the proton motive force of the membrane. May be involved in programmed cell death (PCD), possibly triggering PCD in response to antibiotics and environmental stresses. The polypeptide is Antiholin-like protein LrgA (Bacillus cereus (strain AH187)).